The primary structure comprises 257 residues: 1-(5-phosphoribosyl)-5-[(5-phosphoribosylamino)methylideneamino] imidazole-4-carboxamide isomerase (257 aa).

The active-site Proton acceptor is the D8. The Proton donor role is filled by D129.

It belongs to the HisA/HisF family.

The protein resides in the cytoplasm. The enzyme catalyses 1-(5-phospho-beta-D-ribosyl)-5-[(5-phospho-beta-D-ribosylamino)methylideneamino]imidazole-4-carboxamide = 5-[(5-phospho-1-deoxy-D-ribulos-1-ylimino)methylamino]-1-(5-phospho-beta-D-ribosyl)imidazole-4-carboxamide. Its pathway is amino-acid biosynthesis; L-histidine biosynthesis; L-histidine from 5-phospho-alpha-D-ribose 1-diphosphate: step 4/9. This chain is 1-(5-phosphoribosyl)-5-[(5-phosphoribosylamino)methylideneamino] imidazole-4-carboxamide isomerase, found in Acaryochloris marina (strain MBIC 11017).